We begin with the raw amino-acid sequence, 234 residues long: Probable transcriptional regulatory protein PFL_3960 (234 aa).

It belongs to the TACO1 family.

Its subcellular location is the cytoplasm. The polypeptide is Probable transcriptional regulatory protein PFL_3960 (Pseudomonas fluorescens (strain ATCC BAA-477 / NRRL B-23932 / Pf-5)).